Here is a 59-residue protein sequence, read N- to C-terminus: Protein translocase subunit SecE (59 aa).

Residues 30-50 (ITVITTVIFFAIFFALIDSGI) traverse the membrane as a helical segment.

The protein belongs to the SecE/SEC61-gamma family. In terms of assembly, component of the Sec protein translocase complex. Heterotrimer consisting of SecY, SecE and SecG subunits. The heterotrimers can form oligomers, although 1 heterotrimer is thought to be able to translocate proteins. Interacts with the ribosome. Interacts with SecDF, and other proteins may be involved. Interacts with SecA.

It is found in the cell membrane. Essential subunit of the Sec protein translocation channel SecYEG. Clamps together the 2 halves of SecY. May contact the channel plug during translocation. The sequence is that of Protein translocase subunit SecE from Bacillus licheniformis.